Consider the following 489-residue polypeptide: Cytochrome P450-DIT2 (489 aa).

Position 435 (C435) interacts with heme.

This sequence belongs to the cytochrome P450 family. The cofactor is heme.

Its function is as follows. Involved in spore wall maturation. Thought to catalyze the oxidation of tyrosine residues in the formation of LL-dityrosine a precursor of the spore wall. The sequence is that of Cytochrome P450-DIT2 (DIT2) from Saccharomyces cerevisiae (strain ATCC 204508 / S288c) (Baker's yeast).